Reading from the N-terminus, the 156-residue chain is ATP synthase subunit b (156 aa).

The chain crosses the membrane as a helical span at residues 7-27 (IFFQMLVFFVLGWFTMKFVWP).

The protein belongs to the ATPase B chain family. As to quaternary structure, F-type ATPases have 2 components, F(1) - the catalytic core - and F(0) - the membrane proton channel. F(1) has five subunits: alpha(3), beta(3), gamma(1), delta(1), epsilon(1). F(0) has three main subunits: a(1), b(2) and c(10-14). The alpha and beta chains form an alternating ring which encloses part of the gamma chain. F(1) is attached to F(0) by a central stalk formed by the gamma and epsilon chains, while a peripheral stalk is formed by the delta and b chains.

It is found in the cell inner membrane. Functionally, f(1)F(0) ATP synthase produces ATP from ADP in the presence of a proton or sodium gradient. F-type ATPases consist of two structural domains, F(1) containing the extramembraneous catalytic core and F(0) containing the membrane proton channel, linked together by a central stalk and a peripheral stalk. During catalysis, ATP synthesis in the catalytic domain of F(1) is coupled via a rotary mechanism of the central stalk subunits to proton translocation. Component of the F(0) channel, it forms part of the peripheral stalk, linking F(1) to F(0). The chain is ATP synthase subunit b from Bordetella pertussis (strain Tohama I / ATCC BAA-589 / NCTC 13251).